The primary structure comprises 182 residues: Isopentenyl-diphosphate Delta-isomerase (182 aa).

Positions 25 and 32 each coordinate Mn(2+). The region spanning 30–164 (RLHLAFSSWL…PWAFSPWMVM (135 aa)) is the Nudix hydrolase domain. Cysteine 67 is an active-site residue. Residue cysteine 67 participates in Mg(2+) binding. Mn(2+) is bound at residue histidine 69. A Mg(2+)-binding site is contributed by glutamate 87. Mn(2+) is bound by residues glutamate 114 and glutamate 116. The active site involves glutamate 116.

This sequence belongs to the IPP isomerase type 1 family. Homodimer. Mg(2+) serves as cofactor. Mn(2+) is required as a cofactor.

The protein localises to the cytoplasm. The catalysed reaction is isopentenyl diphosphate = dimethylallyl diphosphate. The protein operates within isoprenoid biosynthesis; dimethylallyl diphosphate biosynthesis; dimethylallyl diphosphate from isopentenyl diphosphate: step 1/1. Catalyzes the 1,3-allylic rearrangement of the homoallylic substrate isopentenyl (IPP) to its highly electrophilic allylic isomer, dimethylallyl diphosphate (DMAPP). The protein is Isopentenyl-diphosphate Delta-isomerase of Shigella dysenteriae serotype 1 (strain Sd197).